The chain runs to 373 residues: MGYLFEETLSSNPKTPIVVDDDNELGLMAVRLANAAAFPMVLKASLELGVFDTLYAEASRTDSFLSPSEIASKLPTTPRNPGAPVLLDRMLRLLASYSMVKCEKVSVGKEQRVYRAEPICRFFLKNNIQDIGSLASQVIVNFDSVFLNTWAQLKDVVLEGGDAFGRAHGGMKLFDYMGTDERFSKLFNQTGFTIAVVKKALEVYQGFKGVNVLVDVGGGVGNTLGVVTSKYPNIKGINFDLTCALAQAPTYPGVEHVAGDMFVDVPTGNAMILKRILHDWTDEDCVKILKNCWKSLPQNGKVVVIELVTPDEAENGDINANIAFDMDMLMFTQCSGGKERSRAEFEALAAASGFSHCQFVCQAYHCWIIEFCK.

5 residues coordinate S-adenosyl-L-homocysteine: Gly-217, Asp-240, Asp-260, Met-261, and Lys-274. The active-site Proton acceptor is the His-278.

The protein belongs to the class I-like SAM-binding methyltransferase superfamily. Cation-independent O-methyltransferase family.

It participates in secondary metabolite biosynthesis. Functionally, involved in indole glucosinolate biosynthesis. Catalyzes methoxylation reactions of the glucosinolate indole ring. Converts the hydroxy intermediates 4-hydroxy-indol-3-yl-methylglucosinolate (4OH-I3M) and 1-hydroxy-indol-3-yl-methylglucosinolate (1OH-I3M) to 4-methoxy-indol-3-yl-methylglucosinolate (4MO-I3M) and 1-methoxy-indol-3-yl-methylglucosinolate(1MO-I3M), respectively. The protein is Indole glucosinolate O-methyltransferase 3 of Arabidopsis thaliana (Mouse-ear cress).